Reading from the N-terminus, the 425-residue chain is MSVSDSLFERAKQLMPGGVNSPVRAFRSVGGAPFFVKAARGATLVTADDQELIDFVCTWGPAIHGHNHPRIKAAIAEALEHGTSFGTPNPYEVEMAELIVRFFPSIQKVRMCNSGTEATMSAIRLARGFTKRSKIIKFAGCYHGHSDSLLIKAGSGALTHGHPDSAGVPISFAQETVVVTYNDRAALEAAFAANVGQIACVIIEPYCGNVGFIMPDAGYLQAVRELCTREGAVLIFDEVMTGFRQARGGVQELENITPDLTCLGKIIGGGLPVGAFGGRTYLMDLLAPLGPVYQAGTLSGNPLAMAAGIAALKLLDEENPYARLDQLGRQLRDAVLAAAKTKGLPVQVPQRGSMFSIFFTPQPVRDYASALAGDAKLFGRFFHTCLANGVYLAPSAYEAAFLSTAHEGAAIDRACEVLASAINEL.

An N6-(pyridoxal phosphate)lysine modification is found at Lys265.

The protein belongs to the class-III pyridoxal-phosphate-dependent aminotransferase family. HemL subfamily. Homodimer. Requires pyridoxal 5'-phosphate as cofactor.

It localises to the cytoplasm. The enzyme catalyses (S)-4-amino-5-oxopentanoate = 5-aminolevulinate. Its pathway is porphyrin-containing compound metabolism; protoporphyrin-IX biosynthesis; 5-aminolevulinate from L-glutamyl-tRNA(Glu): step 2/2. This is Glutamate-1-semialdehyde 2,1-aminomutase from Opitutus terrae (strain DSM 11246 / JCM 15787 / PB90-1).